The sequence spans 166 residues: SsrA-binding protein (166 aa).

It belongs to the SmpB family.

Its subcellular location is the cytoplasm. In terms of biological role, required for rescue of stalled ribosomes mediated by trans-translation. Binds to transfer-messenger RNA (tmRNA), required for stable association of tmRNA with ribosomes. tmRNA and SmpB together mimic tRNA shape, replacing the anticodon stem-loop with SmpB. tmRNA is encoded by the ssrA gene; the 2 termini fold to resemble tRNA(Ala) and it encodes a 'tag peptide', a short internal open reading frame. During trans-translation Ala-aminoacylated tmRNA acts like a tRNA, entering the A-site of stalled ribosomes, displacing the stalled mRNA. The ribosome then switches to translate the ORF on the tmRNA; the nascent peptide is terminated with the 'tag peptide' encoded by the tmRNA and targeted for degradation. The ribosome is freed to recommence translation, which seems to be the essential function of trans-translation. This chain is SsrA-binding protein, found in Parasynechococcus marenigrum (strain WH8102).